The following is a 601-amino-acid chain: Elongation factor 4 (601 aa).

One can recognise a tr-type G domain in the interval 6–188; the sequence is KNIRNFSIIA…QIIKKIPAPD (183 aa). GTP contacts are provided by residues 18-23 and 135-138; these read DHGKST and NKID.

This sequence belongs to the TRAFAC class translation factor GTPase superfamily. Classic translation factor GTPase family. LepA subfamily.

Its subcellular location is the cell membrane. The catalysed reaction is GTP + H2O = GDP + phosphate + H(+). Functionally, required for accurate and efficient protein synthesis under certain stress conditions. May act as a fidelity factor of the translation reaction, by catalyzing a one-codon backward translocation of tRNAs on improperly translocated ribosomes. Back-translocation proceeds from a post-translocation (POST) complex to a pre-translocation (PRE) complex, thus giving elongation factor G a second chance to translocate the tRNAs correctly. Binds to ribosomes in a GTP-dependent manner. This chain is Elongation factor 4, found in Buchnera aphidicola subsp. Schizaphis graminum (strain Sg).